The sequence spans 64 residues: Large ribosomal subunit protein bL35 (64 aa).

The interval 1–28 (MPKVKTKSGAKKRFKLTGSGKIKRKSAY) is disordered.

Belongs to the bacterial ribosomal protein bL35 family.

The chain is Large ribosomal subunit protein bL35 from Cytophaga hutchinsonii (strain ATCC 33406 / DSM 1761 / CIP 103989 / NBRC 15051 / NCIMB 9469 / D465).